The chain runs to 625 residues: Complex I assembly factor ACAD9, mitochondrial (625 aa).

Residues 1-41 (MSGYVLFSRGATAAAAAARASRVLRVFTERRRTLHTSLQSC) constitute a mitochondrion transit peptide. Residue Lys45 is modified to N6-acetyllysine. Position 96 is an N6-succinyllysine (Lys96). Glu430 functions as the Proton acceptor in the catalytic mechanism. A Phosphothreonine modification is found at Thr482. Lys525 carries the N6-acetyllysine; alternate modification. N6-succinyllysine; alternate is present on Lys525.

This sequence belongs to the acyl-CoA dehydrogenase family. As to quaternary structure, homodimer. Interacts with NDUFAF1 and ECSIT. Part of the mitochondrial complex I assembly/MCIA complex that comprises at least the core subunits TMEM126B, NDUFAF1, ECSIT and ACAD9 and complement subunits such as COA1 and TMEM186. Interacts with TMEM70 and TMEM242. FAD serves as cofactor.

It is found in the mitochondrion inner membrane. The catalysed reaction is eicosanoyl-CoA + oxidized [electron-transfer flavoprotein] + H(+) = (2E)-eicosenoyl-CoA + reduced [electron-transfer flavoprotein]. The enzyme catalyses octadecanoyl-CoA + oxidized [electron-transfer flavoprotein] + H(+) = (2E)-octadecenoyl-CoA + reduced [electron-transfer flavoprotein]. It carries out the reaction oxidized [electron-transfer flavoprotein] + hexadecanoyl-CoA + H(+) = (2E)-hexadecenoyl-CoA + reduced [electron-transfer flavoprotein]. It catalyses the reaction decanoyl-CoA + oxidized [electron-transfer flavoprotein] + H(+) = (2E)-decenoyl-CoA + reduced [electron-transfer flavoprotein]. The catalysed reaction is nonanoyl-CoA + oxidized [electron-transfer flavoprotein] + H(+) = (2E)-nonenoyl-CoA + reduced [electron-transfer flavoprotein]. The enzyme catalyses pentadecanoyl-CoA + oxidized [electron-transfer flavoprotein] + H(+) = (2E)-pentadecenoyl-CoA + reduced [electron-transfer flavoprotein]. It carries out the reaction undecanoyl-CoA + oxidized [electron-transfer flavoprotein] + H(+) = trans-2-undecenoyl-CoA + reduced [electron-transfer flavoprotein]. It catalyses the reaction (9Z)-hexadecenoyl-CoA + oxidized [electron-transfer flavoprotein] + H(+) = (2E,9Z)-hexadecadienoyl-CoA + reduced [electron-transfer flavoprotein]. The catalysed reaction is heptadecanoyl-CoA + oxidized [electron-transfer flavoprotein] + H(+) = trans-2-heptadecenoyl-CoA + reduced [electron-transfer flavoprotein]. The enzyme catalyses (9E)-octadecenoyl-CoA + oxidized [electron-transfer flavoprotein] + H(+) = (2E,9E)-octadecadienoyl-CoA + reduced [electron-transfer flavoprotein]. It carries out the reaction oxidized [electron-transfer flavoprotein] + (9Z)-octadecenoyl-CoA + H(+) = (2E,9Z)-octadecadienoyl-CoA + reduced [electron-transfer flavoprotein]. It catalyses the reaction (9Z,12Z)-octadecadienoyl-CoA + oxidized [electron-transfer flavoprotein] + H(+) = (2E,9Z,12Z)-octadecatrienoyl-CoA + reduced [electron-transfer flavoprotein]. The catalysed reaction is (4Z,7Z,10Z,13Z,16Z,19Z)-docosahexaenoyl-CoA + oxidized [electron-transfer flavoprotein] + H(+) = (2E,4Z,7Z,10Z,13Z,16Z,19Z)-docosaheptaenoyl-CoA + reduced [electron-transfer flavoprotein]. The enzyme catalyses tetradecanoyl-CoA + oxidized [electron-transfer flavoprotein] + H(+) = (2E)-tetradecenoyl-CoA + reduced [electron-transfer flavoprotein]. As part of the MCIA complex, primarily participates in the assembly of the mitochondrial complex I and therefore plays a role in oxidative phosphorylation. This moonlighting protein also has a dehydrogenase activity toward a broad range of substrates with greater specificity for long-chain unsaturated acyl-CoAs. However, in vivo, it does not seem to play a primary role in fatty acid oxidation. In addition, the function in complex I assembly is independent of the dehydrogenase activity of the protein. In Rattus norvegicus (Rat), this protein is Complex I assembly factor ACAD9, mitochondrial.